The following is a 104-amino-acid chain: L-rhamnose mutarotase (104 aa).

Tyrosine 18 lines the substrate pocket. Residue histidine 22 is the Proton donor of the active site. Substrate is bound by residues tyrosine 41 and tryptophan 76 to tryptophan 77.

Belongs to the rhamnose mutarotase family. As to quaternary structure, homodimer.

The protein resides in the cytoplasm. The catalysed reaction is alpha-L-rhamnose = beta-L-rhamnose. Its pathway is carbohydrate metabolism; L-rhamnose metabolism. Its function is as follows. Involved in the anomeric conversion of L-rhamnose. The polypeptide is L-rhamnose mutarotase (Clostridium beijerinckii (strain ATCC 51743 / NCIMB 8052) (Clostridium acetobutylicum)).